The chain runs to 1132 residues: Tyrosine-protein kinase JAK2 (1132 aa).

An interaction with cytokine/interferon/growth hormone receptors region spans residues 1 to 239; sequence MGMACLTMTE…RYRFRRFIQQ (239 aa). An FERM domain is found at 37 to 380; sequence PVLQVYLYHS…GYYRLTADAH (344 aa). A Phosphotyrosine; by autocatalysis modification is found at tyrosine 119. 2 positions are modified to phosphotyrosine: tyrosine 372 and tyrosine 373. Residues 401 to 482 form the SH2; atypical domain; sequence HGPISMDFAI…NLKDLLNCYQ (82 aa). Serine 523 is subject to Phosphoserine. In terms of domain architecture, Protein kinase 1 spans 545-809; it reads LIFNESLGQG…AVIRDLNSLF (265 aa). Tyrosine 570 and tyrosine 813 each carry phosphotyrosine. Residues 849–1124 form the Protein kinase 2 domain; that stretch reads LKFLQQLGKG…SFRDLSLRVD (276 aa). 855–863 contacts ATP; it reads LGKGNFGSV. Tyrosine 868 is subject to Phosphotyrosine; by autocatalysis. ATP is bound at residue lysine 882. Residues tyrosine 966 and tyrosine 972 each carry the phosphotyrosine; by autocatalysis modification. Aspartate 976 acts as the Proton acceptor in catalysis. Residues tyrosine 1007 and tyrosine 1008 each carry the phosphotyrosine; by autocatalysis modification.

The protein belongs to the protein kinase superfamily. Tyr protein kinase family. JAK subfamily. In terms of assembly, interacts with IL23R, SKB1 and STAM2. Interacts with EPOR. Interacts with LYN. Interacts with SIRPA. Interacts with SH2B1. Interacts with TEC. Interacts with IFNGR2 (via intracellular domain). Interacts with LEPR (Isoform B). Interacts with HSP90AB1; promotes functional activation in a heat shock-dependent manner. Interacts with STRA6. Interacts with ASB2; the interaction targets JAK2 for Notch-induced proteasomal degradation. Interacts with MPL/TPOR. Mg(2+) serves as cofactor. Post-translationally, autophosphorylated, leading to regulate its activity. Leptin promotes phosphorylation on tyrosine residues, including phosphorylation on Tyr-813. Autophosphorylation on Tyr-119 in response to EPO down-regulates its kinase activity. Autophosphorylation on Tyr-868, Tyr-966 and Tyr-972 in response to growth hormone (GH) are required for maximal kinase activity. Also phosphorylated by TEC. Phosphorylated on tyrosine residues in response to interferon gamma signaling. Phosphorylated on tyrosine residues in response to a signaling cascade that is activated by increased cellular retinol. Undergoes Notch-induced ubiquitination and subsequent proteasomal degradation which is mediated by ASB1 or ASB2, the substrate-recognition components of probable ECS E3 ubiquitin-protein ligase complexes. In terms of tissue distribution, ubiquitously expressed throughout most tissues.

The protein localises to the endomembrane system. The protein resides in the cytoplasm. It is found in the nucleus. It catalyses the reaction L-tyrosyl-[protein] + ATP = O-phospho-L-tyrosyl-[protein] + ADP + H(+). With respect to regulation, regulated by autophosphorylation, can both activate or decrease activity. Heme regulates its activity by enhancing the phosphorylation on Tyr-1007 and Tyr-1008. Functionally, non-receptor tyrosine kinase involved in various processes such as cell growth, development, differentiation or histone modifications. Mediates essential signaling events in both innate and adaptive immunity. In the cytoplasm, plays a pivotal role in signal transduction via its association with type I receptors such as growth hormone (GHR), prolactin (PRLR), leptin (LEPR), erythropoietin (EPOR), thrombopoietin receptor (MPL/TPOR); or type II receptors including IFN-alpha, IFN-beta, IFN-gamma and multiple interleukins. Following ligand-binding to cell surface receptors, phosphorylates specific tyrosine residues on the cytoplasmic tails of the receptor, creating docking sites for STATs proteins. Subsequently, phosphorylates the STATs proteins once they are recruited to the receptor. Phosphorylated STATs then form homodimer or heterodimers and translocate to the nucleus to activate gene transcription. For example, cell stimulation with erythropoietin (EPO) during erythropoiesis leads to JAK2 autophosphorylation, activation, and its association with erythropoietin receptor (EPOR) that becomes phosphorylated in its cytoplasmic domain. Then, STAT5 (STAT5A or STAT5B) is recruited, phosphorylated and activated by JAK2. Once activated, dimerized STAT5 translocates into the nucleus and promotes the transcription of several essential genes involved in the modulation of erythropoiesis. Part of a signaling cascade that is activated by increased cellular retinol and that leads to the activation of STAT5 (STAT5A or STAT5B). In addition, JAK2 mediates angiotensin-2-induced ARHGEF1 phosphorylation. Plays a role in cell cycle by phosphorylating CDKN1B. Cooperates with TEC through reciprocal phosphorylation to mediate cytokine-driven activation of FOS transcription. In the nucleus, plays a key role in chromatin by specifically mediating phosphorylation of 'Tyr-41' of histone H3 (H3Y41ph), a specific tag that promotes exclusion of CBX5 (HP1 alpha) from chromatin. Up-regulates the potassium voltage-gated channel activity of KCNA3. This Mus musculus (Mouse) protein is Tyrosine-protein kinase JAK2.